Consider the following 291-residue polypeptide: Nucleotide-binding protein PPA0813 (291 aa).

Gly-17–Arg-24 is an ATP binding site. Asp-66–Ser-69 contacts GTP.

The protein belongs to the RapZ-like family.

In terms of biological role, displays ATPase and GTPase activities. In Cutibacterium acnes (strain DSM 16379 / KPA171202) (Propionibacterium acnes), this protein is Nucleotide-binding protein PPA0813.